Consider the following 409-residue polypeptide: MSKLNPYFGEYGGMYVPQILMPALKQLETAFIEAQEDESFQQEFTELLKNYAGRPTALTLTRNLSPNPLTKIYLKREDLLHGGAHKTNQVLGQALLAKRMGKKEIIAETGAGQHGVATALACALLGLKCKVYMGAKDVERQSPNVFRMKLMGAEVIPVTSGSATLKDACNEAMRDWSGSYDKAHYLLGTAAGPHPFPTIVREFQRMIGEETKSQILEREGRLPDAVIACVGGGSNAIGMFADFIDEEEVALIGVEPAGKGIDTPMHGAPLKHGKTGIFFGMKAPLMQDSEGQIEESYSVSAGLDFPSVGPQHAHLAATGRATYESATDDEALEAFQLLARSEGIIPALESAHALAYAVKLAKEATKETILVVNLSGRGDKDIFTVADILEQQKVEQQEAEQQQTNNQNN.

K86 carries the N6-(pyridoxal phosphate)lysine modification.

Belongs to the TrpB family. Tetramer of two alpha and two beta chains. Pyridoxal 5'-phosphate serves as cofactor.

The enzyme catalyses (1S,2R)-1-C-(indol-3-yl)glycerol 3-phosphate + L-serine = D-glyceraldehyde 3-phosphate + L-tryptophan + H2O. It participates in amino-acid biosynthesis; L-tryptophan biosynthesis; L-tryptophan from chorismate: step 5/5. Its function is as follows. The beta subunit is responsible for the synthesis of L-tryptophan from indole and L-serine. This is Tryptophan synthase beta chain from Shewanella pealeana (strain ATCC 700345 / ANG-SQ1).